A 152-amino-acid polypeptide reads, in one-letter code: MSPHSDTQETSHEATVTGQPDTLVCLTITAYKKPSLSEKEYRHHMTKVHAKLVSPLMEEYGIVRYTMTHNTKETRPMLYQLYDPQFSNQSDYDCIVQFIFKDIKDFLRMKADPRFLEKVAPDHVNFADTKRSTMTVGYYEEFVNDGKVVPKD.

The 96-residue stretch at 34-129 (PSLSEKEYRH…APDHVNFADT (96 aa)) folds into the EthD domain.

The protein belongs to the tpcK family.

The catalysed reaction is naphtopyrone YWA1 = norrubrofusarin + H2O + H(+). It functions in the pathway pigment biosynthesis. In terms of biological role, dehydratase; part of the gene cluster that mediates the biosynthesis of aurofusarin, a red mycelium pigment which is acting as a mycotoxin. The first step is performed by the polyketide synthase which condenses one acetyl-CoA and 6 malonyl-CoA units to form the first intermediate, the cyclic heptaketide and yellow pigment YWA1. The C2 hydroxyl group in the pyrone ring of YWA1 is probably formed during ring closure by an aldol-type cyclization reaction. The dehydratase aurZ then acts as the first tailoring enzyme in the aurofusarin biosynthetic pathway by converting YWA1 to nor-rubrofusarin. Nor-rubrofusarin is then methylated to rubrofusarin by the O-methyltransferase aurJ. Rubrofusarin is then transported across the plasma membrane by the rubrofusarin-specific pump aurT for further enzymatic processing by the extracellular complex composed of GIP1, aurF, aurO and aurS to yield aurofusarin. The polypeptide is Dehydratase aurZ (Gibberella zeae (strain ATCC MYA-4620 / CBS 123657 / FGSC 9075 / NRRL 31084 / PH-1) (Wheat head blight fungus)).